A 145-amino-acid chain; its full sequence is Large ribosomal subunit protein uL13 (145 aa).

The protein belongs to the universal ribosomal protein uL13 family. In terms of assembly, part of the 50S ribosomal subunit.

Its function is as follows. This protein is one of the early assembly proteins of the 50S ribosomal subunit, although it is not seen to bind rRNA by itself. It is important during the early stages of 50S assembly. This chain is Large ribosomal subunit protein uL13, found in Brevibacillus brevis (strain 47 / JCM 6285 / NBRC 100599).